Consider the following 248-residue polypeptide: Cell division protein ZapD (248 aa).

Belongs to the ZapD family. Interacts with FtsZ.

Its subcellular location is the cytoplasm. Its function is as follows. Cell division factor that enhances FtsZ-ring assembly. Directly interacts with FtsZ and promotes bundling of FtsZ protofilaments, with a reduction in FtsZ GTPase activity. This Aliivibrio salmonicida (strain LFI1238) (Vibrio salmonicida (strain LFI1238)) protein is Cell division protein ZapD.